The sequence spans 114 residues: Large ribosomal subunit protein uL22 (114 aa).

This sequence belongs to the universal ribosomal protein uL22 family. Part of the 50S ribosomal subunit.

Functionally, this protein binds specifically to 23S rRNA; its binding is stimulated by other ribosomal proteins, e.g. L4, L17, and L20. It is important during the early stages of 50S assembly. It makes multiple contacts with different domains of the 23S rRNA in the assembled 50S subunit and ribosome. In terms of biological role, the globular domain of the protein is located near the polypeptide exit tunnel on the outside of the subunit, while an extended beta-hairpin is found that lines the wall of the exit tunnel in the center of the 70S ribosome. The protein is Large ribosomal subunit protein uL22 of Ehrlichia chaffeensis (strain ATCC CRL-10679 / Arkansas).